We begin with the raw amino-acid sequence, 271 residues long: Neurexophilin-1 (271 aa).

The N-terminal stretch at Met-1 to Cys-21 is a signal peptide. Residues Ala-22 to Leu-97 form an II region. Residues Asn-23, Asn-68, Asn-93, Asn-146, Asn-156, and Asn-162 are each glycosylated (N-linked (GlcNAc...) asparagine). The tract at residues Gln-98–Phe-176 is III. The interval Asp-177–Asp-185 is IV (linker domain). Residues Ala-186–Gly-271 form a v (Cys-rich) region.

It belongs to the neurexophilin family.

The protein resides in the secreted. May be signaling molecules that resemble neuropeptides and that act by binding to alpha-neurexins and possibly other receptors. The polypeptide is Neurexophilin-1 (NXPH1) (Pongo abelii (Sumatran orangutan)).